A 260-amino-acid polypeptide reads, in one-letter code: 33 kDa inner dynein arm light chain, axonemal (260 aa).

A disordered region spans residues 1-66 (MIPPNASLVK…PVESQKAQQT (66 aa)). Positions 177 to 260 (MRKALQAEQG…LEGIIAPNKK (84 aa)) form a coiled coil.

Belongs to the inner dynein arm light chain family. May undergo some post-translational modifications that shift its mobility on SDS gels.

In terms of biological role, may play a dynamic role in flagellar motility. The chain is 33 kDa inner dynein arm light chain, axonemal from Strongylocentrotus purpuratus (Purple sea urchin).